The following is a 381-amino-acid chain: Dual-specificity RNA methyltransferase RlmN (381 aa).

Residue E96 is the Proton acceptor of the active site. The Radical SAM core domain maps to T102–D342. An intrachain disulfide couples C109 to C345. [4Fe-4S] cluster contacts are provided by C116, C120, and C123. S-adenosyl-L-methionine contacts are provided by residues G170–E171, S202, S224–H226, and N302. C345 serves as the catalytic S-methylcysteine intermediate.

This sequence belongs to the radical SAM superfamily. RlmN family. [4Fe-4S] cluster serves as cofactor.

It localises to the cytoplasm. It catalyses the reaction adenosine(2503) in 23S rRNA + 2 reduced [2Fe-2S]-[ferredoxin] + 2 S-adenosyl-L-methionine = 2-methyladenosine(2503) in 23S rRNA + 5'-deoxyadenosine + L-methionine + 2 oxidized [2Fe-2S]-[ferredoxin] + S-adenosyl-L-homocysteine. The enzyme catalyses adenosine(37) in tRNA + 2 reduced [2Fe-2S]-[ferredoxin] + 2 S-adenosyl-L-methionine = 2-methyladenosine(37) in tRNA + 5'-deoxyadenosine + L-methionine + 2 oxidized [2Fe-2S]-[ferredoxin] + S-adenosyl-L-homocysteine. Specifically methylates position 2 of adenine 2503 in 23S rRNA and position 2 of adenine 37 in tRNAs. m2A2503 modification seems to play a crucial role in the proofreading step occurring at the peptidyl transferase center and thus would serve to optimize ribosomal fidelity. The protein is Dual-specificity RNA methyltransferase RlmN of Pseudomonas putida (strain ATCC 700007 / DSM 6899 / JCM 31910 / BCRC 17059 / LMG 24140 / F1).